We begin with the raw amino-acid sequence, 202 residues long: ATP-dependent Clp protease proteolytic subunit (202 aa).

The active-site Nucleophile is the serine 98. Histidine 123 is an active-site residue.

This sequence belongs to the peptidase S14 family. In terms of assembly, fourteen ClpP subunits assemble into 2 heptameric rings which stack back to back to give a disk-like structure with a central cavity, resembling the structure of eukaryotic proteasomes.

The protein resides in the cytoplasm. The catalysed reaction is Hydrolysis of proteins to small peptides in the presence of ATP and magnesium. alpha-casein is the usual test substrate. In the absence of ATP, only oligopeptides shorter than five residues are hydrolyzed (such as succinyl-Leu-Tyr-|-NHMec, and Leu-Tyr-Leu-|-Tyr-Trp, in which cleavage of the -Tyr-|-Leu- and -Tyr-|-Trp bonds also occurs).. Its function is as follows. Cleaves peptides in various proteins in a process that requires ATP hydrolysis. Has a chymotrypsin-like activity. Plays a major role in the degradation of misfolded proteins. The sequence is that of ATP-dependent Clp protease proteolytic subunit from Syntrophobacter fumaroxidans (strain DSM 10017 / MPOB).